The sequence spans 342 residues: Periplasmic protein TorT (342 aa).

The signal sequence occupies residues 1-18 (MRVLLFLLLSLFMLPAFS).

The protein belongs to the bacterial solute-binding protein 2 family.

Its subcellular location is the periplasm. Upon binding a putative inducer it probably interacts with TorS and allows it to play a role in the induction of the torCAD operon for trimethylamine N-oxide reductase. This is Periplasmic protein TorT (torT) from Escherichia coli (strain K12).